A 444-amino-acid chain; its full sequence is Tol-Pal system protein TolB (444 aa).

The N-terminal stretch at 1–26 (MNLFRSLAPMGLALALLLPAAAPALA) is a signal peptide. Residues 287 to 310 (ASGTRRQLTNSPSIETAPSYSPDG) show a composition bias toward polar residues. The tract at residues 287 to 311 (ASGTRRQLTNSPSIETAPSYSPDGS) is disordered.

It belongs to the TolB family. In terms of assembly, the Tol-Pal system is composed of five core proteins: the inner membrane proteins TolA, TolQ and TolR, the periplasmic protein TolB and the outer membrane protein Pal. They form a network linking the inner and outer membranes and the peptidoglycan layer.

The protein resides in the periplasm. Functionally, part of the Tol-Pal system, which plays a role in outer membrane invagination during cell division and is important for maintaining outer membrane integrity. In Cereibacter sphaeroides (strain ATCC 17025 / ATH 2.4.3) (Rhodobacter sphaeroides), this protein is Tol-Pal system protein TolB.